The sequence spans 48 residues: Sperm protamine R3 isoform 2 (48 aa).

The span at 1–29 (ARRRHSMKKKRKSVRRRKTRKNQRKRKNS) shows a compositional bias: basic residues. The tract at residues 1–48 (ARRRHSMKKKRKSVRRRKTRKNQRKRKNSLGRSFKAHGFLKQPPRFRP) is disordered.

Testis.

It is found in the nucleus. The protein resides in the chromosome. Protamines substitute for histones in the chromatin of sperm during the haploid phase of spermatogenesis. They compact sperm DNA into a highly condensed, stable and inactive complex. The chain is Sperm protamine R3 isoform 2 from Hydrolagus colliei (Spotted ratfish).